Consider the following 940-residue polypeptide: Phosphoenolpyruvate carboxylase (940 aa).

Residues H138 and K603 contribute to the active site.

Belongs to the PEPCase type 1 family. The cofactor is Mg(2+).

The catalysed reaction is oxaloacetate + phosphate = phosphoenolpyruvate + hydrogencarbonate. Its function is as follows. Forms oxaloacetate, a four-carbon dicarboxylic acid source for the tricarboxylic acid cycle. This is Phosphoenolpyruvate carboxylase from Streptococcus thermophilus (strain CNRZ 1066).